The following is a 256-amino-acid chain: Ubiquinone/menaquinone biosynthesis C-methyltransferase UbiE (256 aa).

S-adenosyl-L-methionine is bound by residues Thr78 and Asp99.

Belongs to the class I-like SAM-binding methyltransferase superfamily. MenG/UbiE family.

It catalyses the reaction a 2-demethylmenaquinol + S-adenosyl-L-methionine = a menaquinol + S-adenosyl-L-homocysteine + H(+). The catalysed reaction is a 2-methoxy-6-(all-trans-polyprenyl)benzene-1,4-diol + S-adenosyl-L-methionine = a 5-methoxy-2-methyl-3-(all-trans-polyprenyl)benzene-1,4-diol + S-adenosyl-L-homocysteine + H(+). It functions in the pathway quinol/quinone metabolism; menaquinone biosynthesis; menaquinol from 1,4-dihydroxy-2-naphthoate: step 2/2. It participates in cofactor biosynthesis; ubiquinone biosynthesis. Its function is as follows. Methyltransferase required for the conversion of demethylmenaquinol (DMKH2) to menaquinol (MKH2) and the conversion of 2-polyprenyl-6-methoxy-1,4-benzoquinol (DDMQH2) to 2-polyprenyl-3-methyl-6-methoxy-1,4-benzoquinol (DMQH2). In Geobacter sulfurreducens (strain ATCC 51573 / DSM 12127 / PCA), this protein is Ubiquinone/menaquinone biosynthesis C-methyltransferase UbiE.